The chain runs to 479 residues: Variant surface glycoprotein ILTAT 1.22 (479 aa).

Residues 1 to 12 (MDTAQVFALFYM) form the signal peptide. Asparagine 120 and asparagine 458 each carry an N-linked (GlcNAc...) asparagine glycan. A lipid anchor (GPI-anchor amidated asparagine) is attached at asparagine 462. The propeptide at 463-479 (NSFAIKTSTLLLAVLLF) is removed in mature form.

The protein localises to the cell membrane. Its function is as follows. VSG forms a coat on the surface of the parasite. The trypanosome evades the immune response of the host by expressing a series of antigenically distinct VSGs from an estimated 1000 VSG genes. This Trypanosoma brucei brucei protein is Variant surface glycoprotein ILTAT 1.22.